A 1062-amino-acid chain; its full sequence is Translation initiation factor IF-2 (1062 aa).

Residues 34–463 (SASSTVEAPV…RMGAMVPRGN (430 aa)) are disordered. Over residues 76-121 (PTPPSRPGLAPRPGPRPVPGRPGPLGRPGPATPAPSPSPASPPLPA) the composition is skewed to pro residues. Over residues 122-153 (SPVQASPVQASPVQASPTSAPAAPRPAAASAV) the composition is skewed to low complexity. The span at 154–178 (PAPPMPSVPSAPSGPRPGPNAPRPG) shows a compositional bias: pro residues. The span at 198–214 (TAGGPTAGGPTAGGPTA) shows a compositional bias: gly residues. Residues 294-305 (RPTPGGMPPRPG) are compositionally biased toward pro residues. 2 stretches are compositionally biased toward gly residues: residues 307–324 (PRSG…GTGG) and 344–430 (PGGG…GGRG). The span at 431 to 442 (RPGRQRKSKRAK) shows a compositional bias: basic residues. A tr-type G domain is found at 555-727 (SRPPVVTVMG…IVLTADASLD (173 aa)). Positions 564-571 (GHVDHGKT) are G1. Residue 564–571 (GHVDHGKT) coordinates GTP. The tract at residues 589 to 593 (GITQH) is G2. Residues 614–617 (DTPG) are G3. GTP is bound by residues 614–618 (DTPGH) and 668–671 (NKVD). Residues 668–671 (NKVD) form a G4 region. A G5 region spans residues 704–706 (SAR).

This sequence belongs to the TRAFAC class translation factor GTPase superfamily. Classic translation factor GTPase family. IF-2 subfamily.

The protein localises to the cytoplasm. In terms of biological role, one of the essential components for the initiation of protein synthesis. Protects formylmethionyl-tRNA from spontaneous hydrolysis and promotes its binding to the 30S ribosomal subunits. Also involved in the hydrolysis of GTP during the formation of the 70S ribosomal complex. This is Translation initiation factor IF-2 from Frankia casuarinae (strain DSM 45818 / CECT 9043 / HFP020203 / CcI3).